We begin with the raw amino-acid sequence, 284 residues long: Tryptophan 2,3-dioxygenase (284 aa).

Residues 51–55, Y113, and R117 contribute to the substrate site; that span reads FIIQH. Position 240 (H240) interacts with heme. Residue T254 participates in substrate binding.

It belongs to the tryptophan 2,3-dioxygenase family. As to quaternary structure, homotetramer. The cofactor is heme.

The enzyme catalyses L-tryptophan + O2 = N-formyl-L-kynurenine. It participates in amino-acid degradation; L-tryptophan degradation via kynurenine pathway; L-kynurenine from L-tryptophan: step 1/2. Heme-dependent dioxygenase that catalyzes the oxidative cleavage of the L-tryptophan (L-Trp) pyrrole ring and converts L-tryptophan to N-formyl-L-kynurenine. Catalyzes the oxidative cleavage of the indole moiety. The sequence is that of Tryptophan 2,3-dioxygenase from Arthrobacter sp. (strain FB24).